Reading from the N-terminus, the 1431-residue chain is Probable serine/threonine-protein kinase irlA (1431 aa).

Residues 1–10 (MTKPIFKSKT) are compositionally biased toward basic residues. 2 disordered regions span residues 1-81 (MTKP…EKEE) and 736-879 (KREK…NNNK). Residues 25-43 (NEDEEEEEGGEEGGEEEEI) are compositionally biased toward acidic residues. Over residues 46–67 (NKNSNNSSSNSNNNNNDNNNNN) the composition is skewed to low complexity. 2 coiled-coil regions span residues 57–97 (NNNN…LDME) and 715–759 (KKRS…NNNN). Residues 68–81 (GEERKVEKEEEKEE) show a composition bias toward basic and acidic residues. Over residues 738 to 749 (EKKKQKDKKKNK) the composition is skewed to basic residues. The segment covering 750 to 776 (SNQNQKNNNNQNNQSNNNKINSPSSNK) has biased composition (low complexity). Over residues 777–791 (LTQNVTPPSSPVNII) the composition is skewed to polar residues. Positions 792–812 (TSSSTTSSSTSSTTSSTTSST) are enriched in low complexity. Positions 821–838 (TLPIKTSSPTKPESQKPS) are enriched in polar residues. Residues 854–878 (NNNNNNNNNNNNNNNNNNNNNNNNN) are compositionally biased toward low complexity. The stretch at 860 to 971 (NNNNNNNNNN…QESIQLNQTL (112 aa)) forms a coiled coil. In terms of domain architecture, Protein kinase spans 987–1261 (RDENNIIGRG…IDTILNHPLF (275 aa)). Residues 993–1001 (IGRGSNGTL) and Lys1016 contribute to the ATP site. The active-site Proton acceptor is the Asp1130. The region spanning 1264–1431 (TNEKIKFYES…NSKDYLNIKF (168 aa)) is the KEN domain.

The protein belongs to the protein kinase superfamily. Ser/Thr protein kinase family.

It catalyses the reaction L-seryl-[protein] + ATP = O-phospho-L-seryl-[protein] + ADP + H(+). The catalysed reaction is L-threonyl-[protein] + ATP = O-phospho-L-threonyl-[protein] + ADP + H(+). The chain is Probable serine/threonine-protein kinase irlA (irlA) from Dictyostelium discoideum (Social amoeba).